A 258-amino-acid chain; its full sequence is MNPPPSLLDKAAIVTGGSRGIGAAIAIELARRGAHVLITYNTASHKAQLVAEEIQKLGRKATVVQASSTDREGPNRIVQAAVSQYGRIDIIVNNAGMADDCLLQDLTHEFWDRIMDVNLRLPAFLVQAALQHLGPAPRIVNISSLAARAGYNATSVYAASKAALEGMTRAWATELGHRYNVTVNCVNPGPVDTDIMAVDENTDAEVVAYWNAKVKETPAAPRVGTPGDIAQIVAFLCEEGSRWCTGSVVNANGGLVTV.

Positions 21, 41, and 94 each coordinate NADP(+). Catalysis depends on proton donor residues Ser143 and Ser144. Residues Tyr157, Lys161, Val191, and Thr193 each contribute to the NADP(+) site. Tyr157 functions as the Proton acceptor in the catalytic mechanism. Lys161 functions as the Lowers pKa of active site Tyr in the catalytic mechanism.

Belongs to the short-chain dehydrogenases/reductases (SDR) family.

The enzyme catalyses (1S,3S,6S,7S,8R)-7-hydroxy-6-[(4-methoxyphenyl)methyl]-3-(methylamino)-5-azatricyclo[6.3.1.0(1,5)]dodecan-9-one + NADPH + H(+) = (1S,3S,6S,7S,8S,9S)-6-[(4-methoxyphenyl)methyl]-3-(methylamino)-5-azatricyclo[6.3.1.0(1,5)]dodecane-7,9-diol + NADP(+). Its pathway is secondary metabolite biosynthesis. In terms of biological role, short-chain dehydrogenase/reductase; part of the gene cluster that mediates the biosynthesis of the alkaloid (-)-FR901483, a potent immunosuppressant that shows efficacy in animal models and a probable inhibitor of purine nucleotide biosynthesis by targeting phosphoribosylpyrophosphate amidotransferase (PPAT). Within the pathway, FrzI catalyzes the formation of dephospho-(-)-FR901483 from the aza-tricyclic intermediate produced by FrzH. The biosynthesis of (-)-FR901483 starts with the condensation of two L-tyrosines to yield (S,S)-dityrosyl-piperazine. This process occurs in 3 steps with the non-canonical nonribosomal peptide synthetase FrzA catalyzing the reduction of L-tyrosine into L-tyrosinal, the spontaneous condensation of 2 L-tyrosinal units, and the subsequent reduction by the NmrA-like family domain-containing oxidoreductase FrzB. The cytochrome P450 monooxygenase FrzC then performs coupling between N10 and C1' to morph the piperazine into a 1,4-diazabicyclo[3.2.1]octane spiro-fused to a 2,5-cyclohexadienone. The dienone portion is further reduced to cyclohexanone by the flavin-dependent reductase FrzD. The methyltranserases (MTs) FrzE and FrzF are then involved in the methylation at the C10' amine and the C4 phenolic oxygen, respectively. The order of the two MTs appear to be interchangeable. Cleavage of the C9-N10' bond by the dioxygenase FrzG then leads to formation of a conjugated iminium. In addition to the oxidation of C9, an additional dehydrogenation between C7 and C8 can occur to give a likely shunt product. The next biosynthetic step is the intramolecular aldol condensation catalyzed by the newly identified aldolase FrzH to yield an aza-tricyclic product with the formation of a C9-C3' bond. The short-chain dehydrogenase/reductase FrzI then produces dephospho-(-)-FR901483 that is phosphorylated at C4'-OH into (-)-FR901483 by the phosphotransferase FrzJ. This chain is Short-chain dehydrogenase/reductase FrzI, found in Cladobotryum sp.